A 144-amino-acid polypeptide reads, in one-letter code: Large ribosomal subunit protein uL15 (144 aa).

Over residues 1 to 18 (MRLNDLHPAEGSRPEGKR) the composition is skewed to basic and acidic residues. The segment at 1-58 (MRLNDLHPAEGSRPEGKRVGRGIGSGLGKTGGRGHKGQKSRSGGSVKPGFEGGQMPLQ) is disordered. Residues 21 to 31 (RGIGSGLGKTG) are compositionally biased toward gly residues.

It belongs to the universal ribosomal protein uL15 family. Part of the 50S ribosomal subunit.

Its function is as follows. Binds to the 23S rRNA. This chain is Large ribosomal subunit protein uL15, found in Alcanivorax borkumensis (strain ATCC 700651 / DSM 11573 / NCIMB 13689 / SK2).